Here is a 430-residue protein sequence, read N- to C-terminus: MVGYIGNVDIGVFDAEVANSISAELERQNTLLQMIASENFVSRAVLQAQGSVLTNKYAEGYAGSRYYCGCALVDVVENLAVERLCRLFGCKFANVQPHSGSQANQQVFMALLKPGDTILGMSLDCGGHLTHGAAPNVSGRWFNAVSYGVNRDTGLIDMDEVEALALSAKPSLIIAGASSYPRRIDFAAFRAIADKVGAYLLADIAHYSGLIAGGCYPSPFGHAHVVTSTTHKTLRGPRGAVIMTDDEEIHKKIRLSVFPGMQGGPLMHVIAAKAVAFKEALHPDFKLYAQQVLENSRVLAGVLSSEGLDVVTGGTDSHIVLLDLRSKGVTGREVSSSLERAGIVCNKNAVPFDTEKPWVTSGIRLGSAAETSRGLGVPEFESIGRLVAKVVNACSLGQEKMSAAEAEVRREVNGLVRSLPMSAFPVCEVC.

(6S)-5,6,7,8-tetrahydrofolate is bound by residues leucine 123 and 127 to 129 (GHL). Lysine 232 carries the post-translational modification N6-(pyridoxal phosphate)lysine. Glutamate 248 lines the (6S)-5,6,7,8-tetrahydrofolate pocket.

Belongs to the SHMT family. As to quaternary structure, homodimer. Pyridoxal 5'-phosphate serves as cofactor.

It localises to the cytoplasm. The enzyme catalyses (6R)-5,10-methylene-5,6,7,8-tetrahydrofolate + glycine + H2O = (6S)-5,6,7,8-tetrahydrofolate + L-serine. It functions in the pathway one-carbon metabolism; tetrahydrofolate interconversion. The protein operates within amino-acid biosynthesis; glycine biosynthesis; glycine from L-serine: step 1/1. Its function is as follows. Catalyzes the reversible interconversion of serine and glycine with tetrahydrofolate (THF) serving as the one-carbon carrier. This reaction serves as the major source of one-carbon groups required for the biosynthesis of purines, thymidylate, methionine, and other important biomolecules. Also exhibits THF-independent aldolase activity toward beta-hydroxyamino acids, producing glycine and aldehydes, via a retro-aldol mechanism. The sequence is that of Serine hydroxymethyltransferase from Anaplasma marginale (strain Florida).